A 624-amino-acid chain; its full sequence is (-)-beta-phellandrene synthase 1, chloroplastic (624 aa).

The N-terminal 48 residues, 1–48 (MAIVSSVPLASKSCLHKSLISSIHKLKPFCRTIPTLGMSRPGKYVMPS), are a transit peptide targeting the chloroplast. Residues D375, D379, and D527 each coordinate Mg(2+). The DDXXD motif motif lies at 375 to 379 (DDMYD).

This sequence belongs to the terpene synthase family. Tpsd subfamily. Mg(2+) serves as cofactor. Requires Mn(2+) as cofactor.

The protein resides in the plastid. It is found in the chloroplast. The catalysed reaction is (2E)-geranyl diphosphate = (-)-beta-phellandrene + diphosphate. The protein operates within terpene metabolism; oleoresin biosynthesis. Functionally, terpene synthase (TPS) involved in the biosynthesis of monoterpene natural products included in conifer oleoresin secretions and volatile emissions; these compounds contribute to biotic and abiotic stress defense against herbivores and pathogens. Catalyzes the conversion of (2E)-geranyl diphosphate (GPP) to (-)-beta-phellandrene. The polypeptide is (-)-beta-phellandrene synthase 1, chloroplastic (Picea sitchensis (Sitka spruce)).